Reading from the N-terminus, the 378-residue chain is Spermatogenic leucine zipper protein 1 (378 aa).

Positions 1-31 (MSDTDNSAEMPARCPSPNPAPGAKQEPPNSG) are disordered. S106 is subject to Phosphoserine. An interaction with PPP1CC isoform gamma-2 region spans residues 116-122 (KNKIRFK). Residues 116–127 (KNKIRFKDDLFI) are helix-loop-helix motif. Residues 128–193 (HFDPEREQNT…HLRGEYRKLR (66 aa)) form a basic motif region. Residues 182 to 233 (SLHLRGEYRKLRNNMEQLLQEADHWSKQHNELSELMRSYQECQNETQETTDK) are a coiled coil. S207 is subject to Phosphoserine. The interval 252-273 (LEEQVKKLSHDTHALHLIAALL) is leucine-zipper.

As to quaternary structure, interacts with PPP1CC isoform gamma-2. This interaction can prevent SPZ1 binding to the E-box and inhibits PPP1CC activity. Post-translationally, phosphorylated by MAPK1/ERK2 and MAPK3/ERK1. In terms of tissue distribution, expressed specifically in the testis and epidydimis. In the testis expressed in both germ cells and somatic cells (Sertoli and Leydig cells). Expressed in several tumor cell lines.

It localises to the cytoplasm. It is found in the nucleus. Functionally, transcription factor that binds to the DNA sequence 5'-CANNTG-3'(E box) and the G-box motif. Directly binds to a guanine-rich region of the PCNA promoter and up-regulates its expression which in turn induces cell transformation and tumor formation. May play an important role in the regulation of cell proliferation and differentiation during spermatogenesis. This chain is Spermatogenic leucine zipper protein 1 (Spz1), found in Mus musculus (Mouse).